A 346-amino-acid chain; its full sequence is MLTERQSMILKYIIDDYSKTGVPIGSKALAEQLPIHVSSATIRNEMAVLSHQNFIEKLHTSSGRVPSNQGYRYYIDNLAKPAKLDTKRLEYISEMLDGSFQQIDEIVRQSADILSHLTDYTALTFSPELTTENTIKHLQLVNLGLNRMMVVIVMGNEQVESQSFLVTNQYIDSQLSLATNLLNQQLVGKTAREVKQVFQSKILTELHTYLPDTKQFVRAIQAILSKIDDDHYFISGQMNMFEQNGKQDFSKIKSLYSMFNNDNGIDALLEKSSKPISVKIGAEFDNDWLKDYSIITGSYDLGNHGIGRIALIGPMRMSYPNMLGVVDAFRHELKNRISGYYRSYDQ.

This sequence belongs to the HrcA family.

Negative regulator of class I heat shock genes (grpE-dnaK-dnaJ and groELS operons). Prevents heat-shock induction of these operons. In Fructilactobacillus sanfranciscensis (Lactobacillus sanfranciscensis), this protein is Heat-inducible transcription repressor HrcA.